The following is a 217-amino-acid chain: Ribulose-phosphate 3-epimerase (217 aa).

Serine 6 provides a ligand contact to substrate. A divalent metal cation is bound by residues histidine 29, aspartate 31, and histidine 62. Aspartate 31 serves as the catalytic Proton acceptor. Residues histidine 62, 138 to 141 (GFGG), 171 to 173 (DGG), and 193 to 194 (GS) contribute to the substrate site. Residue aspartate 171 coordinates a divalent metal cation. Aspartate 171 functions as the Proton donor in the catalytic mechanism.

This sequence belongs to the ribulose-phosphate 3-epimerase family. A divalent metal cation is required as a cofactor.

The enzyme catalyses D-ribulose 5-phosphate = D-xylulose 5-phosphate. Its pathway is carbohydrate degradation. Catalyzes the reversible epimerization of D-ribulose 5-phosphate to D-xylulose 5-phosphate. In Helicobacter pylori (strain ATCC 700392 / 26695) (Campylobacter pylori), this protein is Ribulose-phosphate 3-epimerase.